An 823-amino-acid chain; its full sequence is Adhesion G protein-coupled receptor E2 (823 aa).

Residues 1–23 (MGGRVFLVFLAFCVWLTLPGAET) form the signal peptide. At 24 to 540 (QDSRGCARWC…EEDPVLTVIT (517 aa)) the chain is on the extracellular side. The 42-residue stretch at 25–66 (DSRGCARWCPQDSSCVNATACRCNPGFSSFSEIITTPMETCD) folds into the EGF-like 1 domain. Disulfide bonds link cysteine 29–cysteine 39, cysteine 33–cysteine 45, cysteine 47–cysteine 65, cysteine 71–cysteine 85, cysteine 79–cysteine 94, cysteine 96–cysteine 117, cysteine 123–cysteine 136, cysteine 130–cysteine 145, cysteine 147–cysteine 161, cysteine 167–cysteine 180, cysteine 174–cysteine 189, cysteine 191–cysteine 210, cysteine 216–cysteine 229, cysteine 223–cysteine 238, and cysteine 240–cysteine 259. The N-linked (GlcNAc...) asparagine glycan is linked to asparagine 41. The region spanning 67–118 (DINECATLSKVSCGKFSDCWNTEGSYDCVCSPGYEPVSGAKTFKNESENTCQ) is the EGF-like 2; calcium-binding domain. N-linked (GlcNAc...) asparagine glycosylation occurs at asparagine 111. One can recognise an EGF-like 3; calcium-binding domain in the interval 119–162 (DVDECQQNPRLCKSYGTCVNTLGSYTCQCLPGFKLKPEDPKLCT). An EGF-like 4; calcium-binding domain is found at 163–211 (DVNECTSGQNPCHSSTHCLNNVGSYQCRCRPGWQPIPGSPNGPNNTVCE). Asparagine 206 carries an N-linked (GlcNAc...) asparagine glycan. An EGF-like 5; calcium-binding domain is found at 212-260 (DVDECSSGQHQCDSSTVCFNTVGSYSCRCRPGWKPRHGIPNNQKDTVCE). 5 N-linked (GlcNAc...) asparagine glycosylation sites follow: asparagine 298, asparagine 347, asparagine 354, asparagine 456, and asparagine 460. Positions 354–530 (NFSYPAGTEL…AVLMAHYDVQ (177 aa)) constitute a GAIN-B domain. Cystine bridges form between cysteine 482/cysteine 512 and cysteine 500/cysteine 514. A GPS region spans residues 482 to 530 (CVFWEHGQNGCGHWATTGCSTIGTRDTSTICRCTHLSSFAVLMAHYDVQ). A helical membrane pass occupies residues 541 to 561 (YMGLSVSLLCLLLAALTFLLC). Residues 562-569 (KAIQNTST) are Cytoplasmic-facing. A helical transmembrane segment spans residues 570–590 (SLHLQLSLCLFLAHLLFLVAI). Over 591 to 605 (DQTGHKVLCSIIAGT) the chain is Extracellular. A helical membrane pass occupies residues 606 to 626 (LHYLYLATLTWMLLEALYLFL). The Cytoplasmic segment spans residues 627-644 (TARNLTVVNYSSINRFMK). A helical transmembrane segment spans residues 645–665 (KLMFPVGYGVPAVTVAISAAS). Topologically, residues 666 to 683 (RPHLYGTPSRCWLQPEKG) are extracellular. A helical transmembrane segment spans residues 684-704 (FIWGFLGPVCAIFSVNLVLFL). The Cytoplasmic portion of the chain corresponds to 705 to 735 (VTLWILKNRLSSLNSEVSTLRNTRMLAFKAT). A helical membrane pass occupies residues 736-756 (AQLFILGCTWCLGILQVGPAA). Topologically, residues 757–760 (RVMA) are extracellular. A helical membrane pass occupies residues 761–781 (YLFTIINSLQGVFIFLVYCLL). Residues 782–823 (SQQVREQYGKWSKGIRKLKTESEMHTLSSSAKADTSKPSTVN) lie on the Cytoplasmic side of the membrane.

It belongs to the G-protein coupled receptor 2 family. Adhesion G-protein coupled receptor (ADGR) subfamily. Forms a heterodimer, consisting of a large extracellular region non-covalently linked to a seven-transmembrane moiety. Interacts with chondroitin sulfate; the interaction with chondroitin sulfate is calcium-dependent. Interacts with CD55. Post-translationally, autoproteolytically cleaved into 2 subunits, an extracellular alpha subunit and a seven-transmembrane beta subunit. Expression is restricted to myeloid cells. Highest expression was found in peripheral blood leukocytes, followed by spleen and lymph nodes, with intermediate to low levels in thymus, bone marrow, fetal liver, placenta, and lung, and no expression in heart, brain, skeletal muscle, kidney, or pancreas. Expression is also detected in monocyte/macrophage and Jurkat cell lines but not in other cell lines tested. High expression in mast cells.

It is found in the cell membrane. The protein resides in the cell projection. The protein localises to the ruffle membrane. Functionally, cell surface receptor that binds to the chondroitin sulfate moiety of glycosaminoglycan chains and promotes cell attachment. Promotes granulocyte chemotaxis, degranulation and adhesion. In macrophages, promotes the release of inflammatory cytokines, including IL8 and TNF. Signals probably through G-proteins. Is a regulator of mast cell degranulation. This is Adhesion G protein-coupled receptor E2 from Homo sapiens (Human).